The sequence spans 218 residues: Imidazole glycerol phosphate synthase subunit HisH (218 aa).

In terms of domain architecture, Glutamine amidotransferase type-1 spans 7–211 (STVIIDTGCA…LALDKASLDA (205 aa)). Cys82 functions as the Nucleophile in the catalytic mechanism. Active-site residues include His186 and Glu188.

As to quaternary structure, heterodimer of HisH and HisF.

The protein localises to the cytoplasm. It carries out the reaction 5-[(5-phospho-1-deoxy-D-ribulos-1-ylimino)methylamino]-1-(5-phospho-beta-D-ribosyl)imidazole-4-carboxamide + L-glutamine = D-erythro-1-(imidazol-4-yl)glycerol 3-phosphate + 5-amino-1-(5-phospho-beta-D-ribosyl)imidazole-4-carboxamide + L-glutamate + H(+). The catalysed reaction is L-glutamine + H2O = L-glutamate + NH4(+). It participates in amino-acid biosynthesis; L-histidine biosynthesis; L-histidine from 5-phospho-alpha-D-ribose 1-diphosphate: step 5/9. IGPS catalyzes the conversion of PRFAR and glutamine to IGP, AICAR and glutamate. The HisH subunit catalyzes the hydrolysis of glutamine to glutamate and ammonia as part of the synthesis of IGP and AICAR. The resulting ammonia molecule is channeled to the active site of HisF. This Shewanella sediminis (strain HAW-EB3) protein is Imidazole glycerol phosphate synthase subunit HisH.